Here is a 210-residue protein sequence, read N- to C-terminus: DNA-directed RNA polymerases I, II, and III subunit RPABC1 (210 aa).

At Met-1 the chain carries N-acetylmethionine. A Glycyl lysine isopeptide (Lys-Gly) (interchain with G-Cter in SUMO2) cross-link involves residue Lys-81.

It belongs to the archaeal Rpo5/eukaryotic RPB5 RNA polymerase subunit family. As to quaternary structure, component of the RNA polymerase I (Pol I), RNA polymerase II (Pol II) and RNA polymerase III (Pol III) complexes consisting of at least 13, 12 and 17 subunits, respectively. Pol I complex consists of a ten-subunit catalytic core composed of POLR1A/RPA1, POLR1B/RPA2, POLR1C/RPAC1, POLR1D/RPAC2, POLR1H/RPA12, POLR2E/RPABC1, POLR2F/RPABC2, POLR2H/RPABC3, POLR2K/RPABC4 and POLR2L/RPABC5; a mobile stalk subunit POLR1F/RPA43 protruding from the core and additional subunits homologous to general transcription factors POLR1E/RPA49 and POLR1G/RPA34. Part of Pol I pre-initiation complex (PIC), in which Pol I core assembles with RRN3 and promoter-bound UTBF and SL1/TIF-IB complex. Pol II complex contains a ten-subunit catalytic core composed of POLR2A/RPB1, POLR2B/RPB2, POLR2C/RPB3, POLR2I/RPB9, POLR2J/RPB11, POLR2E/RPABC1, POLR2F/RPABC2, POLR2H/RPABC3, POLR2K/RPABC4 and POLR2L/RPABC5 and a mobile stalk composed of two subunits POLR2D/RPB4 and POLR2G/RPB7. Part of Pol II(G) complex, in which Pol II core associates with an additional subunit POLR2M; unlike conventional Pol II, Pol II(G) functions as a transcriptional repressor. Part of TBP-based Pol II pre-initiation complex (PIC), in which Pol II core assembles with general transcription factors and other specific initiation factors including GTF2E1, GTF2E2, GTF2F1, GTF2F2, TCEA1, ERCC2, ERCC3, GTF2H2, GTF2H3, GTF2H4, GTF2H5, GTF2A1, GTF2A2, GTF2B and TBP; this large multi-subunit PIC complex mediates DNA unwinding and targets Pol II core to the transcription start site where the first phosphodiester bond forms. In Pol II complex, this subunit is present in 2-fold molar excess over the other subunits. Pol III complex consists of a ten-subunit catalytic core composed of POLR3A/RPC1, POLR3B/RPC2, POLR1C/RPAC1, POLR1D/RPAC2, POLR3K/RPC10, POLR2E/RPABC1, POLR2F/RPABC2, POLR2H/RPABC3, POLR2K/RPABC4 and POLR2L/RPABC5; a mobile stalk composed of two subunits POLR3H/RPC8 and CRCP/RPC9, protruding from the core and functioning primarily in transcription initiation; and additional subunits homologous to general transcription factors of the RNA polymerase II machinery, POLR3C/RPC3-POLR3F/RPC6-POLR3G/RPC7 heterotrimer required for transcription initiation and POLR3D/RPC4-POLR3E/RPC5 heterodimer involved in both transcription initiation and termination. Component of the PAQosome complex which is responsible for the biogenesis of several protein complexes and which consists of R2TP complex members RUVBL1, RUVBL2, RPAP3 and PIH1D1, URI complex members PFDN2, PFDN6, PDRG1, UXT and URI1 as well as ASDURF, POLR2E and DNAAF10/WDR92. Interacts with URI1.

The protein localises to the nucleus. Its subcellular location is the nucleolus. DNA-dependent RNA polymerase catalyzes the transcription of DNA into RNA using the four ribonucleoside triphosphates as substrates. Common component of RNA polymerases I, II and III which synthesize ribosomal RNA precursors, mRNA precursors and many functional non-coding RNAs, and small RNAs, such as 5S rRNA and tRNAs, respectively. Pol II is the central component of the basal RNA polymerase II transcription machinery. Pols are composed of mobile elements that move relative to each other. In Pol II, POLR2E/RPABC1 is part of the lower jaw surrounding the central large cleft and thought to grab the incoming DNA template. Seems to be the major component in this process. In Mus musculus (Mouse), this protein is DNA-directed RNA polymerases I, II, and III subunit RPABC1.